A 249-amino-acid polypeptide reads, in one-letter code: Structural protein VP10 (249 aa).

The protein resides in the virion. In terms of biological role, forms the virion spike 'foot' and helps anchor the VP9 spike 'head' protein in the virion. This Banna virus (BAV) protein is Structural protein VP10 (Segment-10).